Here is a 792-residue protein sequence, read N- to C-terminus: Probable CoA-transferase Rv1866 (792 aa).

The Nucleophile role is filled by D558.

This sequence belongs to the CoA-transferase III family.

In terms of biological role, probable CoA-transferase. The polypeptide is Probable CoA-transferase Rv1866 (Mycobacterium tuberculosis (strain ATCC 25618 / H37Rv)).